Reading from the N-terminus, the 741-residue chain is Linoleate 9S-lipoxygenase (741 aa).

In terms of domain architecture, PLAT spans 1–53 (IPGAFYIKNFMQVEFYLKSLTLEDIPNHGTIHFICNSWIYNSKVYKSDRIFFA). In terms of domain architecture, Lipoxygenase spans 56-741 (TYLPSETPAP…SEEGLTFRGI (686 aa)). A disordered region spans residues 108-144 (ALARPVLGGSTLPYPRRGRTGRPKTKKDPNSEKPSDF). Over residues 123-132 (RRGRTGRPKT) the composition is skewed to basic residues. Basic and acidic residues predominate over residues 133–144 (KKDPNSEKPSDF). Fe cation contacts are provided by histidine 407, histidine 412, histidine 598, and asparagine 602.

It belongs to the lipoxygenase family. As to quaternary structure, monomer. Fe cation is required as a cofactor.

It localises to the cytoplasm. It carries out the reaction (9Z,12Z)-octadecadienoate + O2 = (9S)-hydroperoxy-(10E,12Z)-octadecadienoate. The enzyme catalyses (9Z,12Z)-octadecadienoate + O2 = (13S)-hydroperoxy-(9Z,11E)-octadecadienoate. It catalyses the reaction (9Z,12Z,15Z)-octadecatrienoate + O2 = (13S)-hydroperoxy-(9Z,11E,15Z)-octadecatrienoate. It participates in lipid metabolism; oxylipin biosynthesis. Functionally, plant lipoxygenase may be involved in a number of diverse aspects of plant physiology including growth and development, pest resistance, and senescence or responses to wounding. It catalyzes the hydroperoxidation of lipids containing a cis,cis-1,4-pentadiene structure. The sequence is that of Linoleate 9S-lipoxygenase from Phaseolus vulgaris (Kidney bean).